Reading from the N-terminus, the 100-residue chain is Large ribosomal subunit protein uL23 (100 aa).

Belongs to the universal ribosomal protein uL23 family. Part of the 50S ribosomal subunit. Contacts protein L29, and trigger factor when it is bound to the ribosome.

One of the early assembly proteins it binds 23S rRNA. One of the proteins that surrounds the polypeptide exit tunnel on the outside of the ribosome. Forms the main docking site for trigger factor binding to the ribosome. The polypeptide is Large ribosomal subunit protein uL23 (Vibrio campbellii (strain ATCC BAA-1116)).